A 774-amino-acid chain; its full sequence is 5-methyltetrahydropteroyltriglutamate--homocysteine methyltransferase (774 aa).

Residues 15–18 and Lys-116 each bind 5-methyltetrahydropteroyltri-L-glutamate; that span reads RELK. L-homocysteine contacts are provided by residues 445–447 and Glu-498; that span reads IGS. L-methionine-binding positions include 445 to 447 and Glu-498; that span reads IGS. Residues 529 to 530 and Trp-575 each bind 5-methyltetrahydropteroyltri-L-glutamate; that span reads RC. Asp-613 serves as a coordination point for L-homocysteine. Asp-613 serves as a coordination point for L-methionine. A 5-methyltetrahydropteroyltri-L-glutamate-binding site is contributed by Glu-619. Zn(2+) contacts are provided by His-655, Cys-657, and Glu-679. His-708 acts as the Proton donor in catalysis. Cys-740 contributes to the Zn(2+) binding site.

Belongs to the vitamin-B12 independent methionine synthase family. Zn(2+) is required as a cofactor.

It catalyses the reaction 5-methyltetrahydropteroyltri-L-glutamate + L-homocysteine = tetrahydropteroyltri-L-glutamate + L-methionine. It participates in amino-acid biosynthesis; L-methionine biosynthesis via de novo pathway; L-methionine from L-homocysteine (MetE route): step 1/1. In terms of biological role, catalyzes the transfer of a methyl group from 5-methyltetrahydrofolate to homocysteine resulting in methionine formation. The polypeptide is 5-methyltetrahydropteroyltriglutamate--homocysteine methyltransferase (Flavobacterium johnsoniae (strain ATCC 17061 / DSM 2064 / JCM 8514 / BCRC 14874 / CCUG 350202 / NBRC 14942 / NCIMB 11054 / UW101) (Cytophaga johnsonae)).